A 130-amino-acid chain; its full sequence is Small ribosomal subunit protein uS9 (130 aa).

The segment at 107–130 (DSRKVERKKPGLKKARKASQFSKR) is disordered. The segment covering 111 to 130 (VERKKPGLKKARKASQFSKR) has biased composition (basic residues).

The protein belongs to the universal ribosomal protein uS9 family.

In Streptococcus sanguinis (strain SK36), this protein is Small ribosomal subunit protein uS9.